Reading from the N-terminus, the 404-residue chain is Nicotinate phosphoribosyltransferase (404 aa).

At histidine 225 the chain carries Phosphohistidine; by autocatalysis.

This sequence belongs to the NAPRTase family. Transiently phosphorylated on a His residue during the reaction cycle. Phosphorylation strongly increases the affinity for substrates and increases the rate of nicotinate D-ribonucleotide production. Dephosphorylation regenerates the low-affinity form of the enzyme, leading to product release.

It catalyses the reaction nicotinate + 5-phospho-alpha-D-ribose 1-diphosphate + ATP + H2O = nicotinate beta-D-ribonucleotide + ADP + phosphate + diphosphate. It participates in cofactor biosynthesis; NAD(+) biosynthesis; nicotinate D-ribonucleotide from nicotinate: step 1/1. In terms of biological role, catalyzes the synthesis of beta-nicotinate D-ribonucleotide from nicotinate and 5-phospho-D-ribose 1-phosphate at the expense of ATP. The protein is Nicotinate phosphoribosyltransferase of Methanosarcina acetivorans (strain ATCC 35395 / DSM 2834 / JCM 12185 / C2A).